Here is a 376-residue protein sequence, read N- to C-terminus: UPF0754 membrane protein Sca_1420 (376 aa).

2 consecutive transmembrane segments (helical) span residues 4-24 and 356-376; these read FLVI…TNII and LLGF…ALFV.

Belongs to the UPF0754 family.

It is found in the cell membrane. This is UPF0754 membrane protein Sca_1420 from Staphylococcus carnosus (strain TM300).